Reading from the N-terminus, the 187-residue chain is GTP cyclohydrolase 1 (187 aa).

The Zn(2+) site is built by C76, H79, and C148.

This sequence belongs to the GTP cyclohydrolase I family. Toroid-shaped homodecamer, composed of two pentamers of five dimers.

It catalyses the reaction GTP + H2O = 7,8-dihydroneopterin 3'-triphosphate + formate + H(+). It participates in cofactor biosynthesis; 7,8-dihydroneopterin triphosphate biosynthesis; 7,8-dihydroneopterin triphosphate from GTP: step 1/1. The chain is GTP cyclohydrolase 1 from Streptococcus suis (strain 98HAH33).